Reading from the N-terminus, the 586-residue chain is 2-succinyl-5-enolpyruvyl-6-hydroxy-3-cyclohexene-1-carboxylate synthase (586 aa).

Belongs to the TPP enzyme family. MenD subfamily. As to quaternary structure, homodimer. The cofactor is Mg(2+). It depends on Mn(2+) as a cofactor. Thiamine diphosphate is required as a cofactor.

The catalysed reaction is isochorismate + 2-oxoglutarate + H(+) = 5-enolpyruvoyl-6-hydroxy-2-succinyl-cyclohex-3-ene-1-carboxylate + CO2. It functions in the pathway quinol/quinone metabolism; 1,4-dihydroxy-2-naphthoate biosynthesis; 1,4-dihydroxy-2-naphthoate from chorismate: step 2/7. Its pathway is quinol/quinone metabolism; menaquinone biosynthesis. Catalyzes the thiamine diphosphate-dependent decarboxylation of 2-oxoglutarate and the subsequent addition of the resulting succinic semialdehyde-thiamine pyrophosphate anion to isochorismate to yield 2-succinyl-5-enolpyruvyl-6-hydroxy-3-cyclohexene-1-carboxylate (SEPHCHC). This chain is 2-succinyl-5-enolpyruvyl-6-hydroxy-3-cyclohexene-1-carboxylate synthase, found in Geobacillus thermodenitrificans (strain NG80-2).